Here is a 384-residue protein sequence, read N- to C-terminus: MSWQDKINAALDARRAADALRRRYPVAQGAGRWLVADDRQYLNFSSNDYLGLSHHPQIIRAWKQSAEQFGVGSGGSGHVSGYSVAHQALEEELAEWLGYSRALLFISGFAANQAVIAAMMAKEDRIVADRLSHASLLEAASLSPSQLRRFVHNDVTHLARLLASPCPGQQMVVTEGVFSMDGDSAPLAEIQQVTQQHNGWLMVDDAHGTGVIGEQGRGSCWLQKVKPELLVVTFGKGFGVSGAAVLCSSTVADYLLQFARHLIYSTSMPPAQAQALRASLAVIRSDEGDARREKLAALITRFRAGVQDLPFTLADSCSAIQPLIVGDNSRALQLAEKLRQQGCWVTAIRPPTVPAGTARLRLTLTAAHEMQDIDRLLEVLHGNG.

Arg21 lines the substrate pocket. 108-109 (GF) serves as a coordination point for pyridoxal 5'-phosphate. His133 contributes to the substrate binding site. Residues Ser179, His207, and Thr233 each contribute to the pyridoxal 5'-phosphate site. Lys236 is modified (N6-(pyridoxal phosphate)lysine). Thr352 contacts substrate.

It belongs to the class-II pyridoxal-phosphate-dependent aminotransferase family. BioF subfamily. As to quaternary structure, homodimer. It depends on pyridoxal 5'-phosphate as a cofactor.

The enzyme catalyses 6-carboxyhexanoyl-[ACP] + L-alanine + H(+) = (8S)-8-amino-7-oxononanoate + holo-[ACP] + CO2. It participates in cofactor biosynthesis; biotin biosynthesis. In terms of biological role, catalyzes the decarboxylative condensation of pimeloyl-[acyl-carrier protein] and L-alanine to produce 8-amino-7-oxononanoate (AON), [acyl-carrier protein], and carbon dioxide. The sequence is that of 8-amino-7-oxononanoate synthase from Escherichia coli O9:H4 (strain HS).